Here is a 299-residue protein sequence, read N- to C-terminus: tRNA dimethylallyltransferase 2 (299 aa).

An ATP-binding site is contributed by 9 to 16; sequence GPTGVGKT. 11–16 serves as a coordination point for substrate; the sequence is TGVGKT. Residues 34-37 are interaction with substrate tRNA; the sequence is DSRQ.

The protein belongs to the IPP transferase family. In terms of assembly, monomer. It depends on Mg(2+) as a cofactor.

The enzyme catalyses adenosine(37) in tRNA + dimethylallyl diphosphate = N(6)-dimethylallyladenosine(37) in tRNA + diphosphate. In terms of biological role, catalyzes the transfer of a dimethylallyl group onto the adenine at position 37 in tRNAs that read codons beginning with uridine, leading to the formation of N6-(dimethylallyl)adenosine (i(6)A). The chain is tRNA dimethylallyltransferase 2 from Parabacteroides distasonis (strain ATCC 8503 / DSM 20701 / CIP 104284 / JCM 5825 / NCTC 11152).